The following is a 197-amino-acid chain: Imidazoleglycerol-phosphate dehydratase (197 aa).

The protein belongs to the imidazoleglycerol-phosphate dehydratase family.

The protein localises to the cytoplasm. The enzyme catalyses D-erythro-1-(imidazol-4-yl)glycerol 3-phosphate = 3-(imidazol-4-yl)-2-oxopropyl phosphate + H2O. The protein operates within amino-acid biosynthesis; L-histidine biosynthesis; L-histidine from 5-phospho-alpha-D-ribose 1-diphosphate: step 6/9. The protein is Imidazoleglycerol-phosphate dehydratase of Pseudomonas fluorescens (strain ATCC BAA-477 / NRRL B-23932 / Pf-5).